The primary structure comprises 334 residues: Zinc-finger homeodomain protein 10 (334 aa).

Residues Met1–Thr15 are compositionally biased toward low complexity. Disordered stretches follow at residues Met1–Lys33 and Phe103–Leu164. The ZF-HD dimerization-type; degenerate zinc finger occupies Tyr56–Asp107. A compositionally biased stretch (pro residues) spans Pro136–Ile155. A DNA-binding region (homeobox) is located at residues Arg200–Asp263. A disordered region spans residues Asn292 to Ser334. A compositionally biased stretch (gly residues) spans Ser309–Val328.

In terms of assembly, homo- and heterodimer with other ZFHD proteins. Interacts with MIF1, MIF2 and MIF3; these interactions prevent nuclear localization and DNA-binding to inhibit transcription regulation activity. Binds to ZHD1, ZHD2, ZHD4, ZHD5, ZHD6, ZHD7 and ZHD8. Interacts with KIN10 and KIN11. As to expression, mostly expressed in rosettes (e.g. young leaves), flowers (e.g. styles), siliques and inflorescence.

It localises to the nucleus. In terms of biological role, putative transcription factor. Probably involved in establishing polarity during leaf development through the gibberellic acid (GA) signaling pathway. This is Zinc-finger homeodomain protein 10 (ZHD10) from Arabidopsis thaliana (Mouse-ear cress).